We begin with the raw amino-acid sequence, 192 residues long: Imidazoleglycerol-phosphate dehydratase (192 aa).

Belongs to the imidazoleglycerol-phosphate dehydratase family.

It localises to the cytoplasm. It carries out the reaction D-erythro-1-(imidazol-4-yl)glycerol 3-phosphate = 3-(imidazol-4-yl)-2-oxopropyl phosphate + H2O. It participates in amino-acid biosynthesis; L-histidine biosynthesis; L-histidine from 5-phospho-alpha-D-ribose 1-diphosphate: step 6/9. This chain is Imidazoleglycerol-phosphate dehydratase, found in Vesicomyosocius okutanii subsp. Calyptogena okutanii (strain HA).